The following is a 238-amino-acid chain: MRSQQSLEEIAELYGLLENIKKEYEDGIHSVLRKSNPELFSNPHTIPKLKKISINRGLGLAAQNTNILKKSITEFTRITGQKPLITRAKKAVAGFKIREEMELGLSSTLRGEKMYSFLTKLIFFTFAQIRDFRGLSVRSFDKAGNYTFSLKEQLIFPEIEYDDVDQVQGLSITLVLDSSTPKSRSKTVDRVLNGMILLKFLRFPLNDCGYYDKYESFGEITQVWDKKKHLRRKRWSQE.

It belongs to the universal ribosomal protein uL5 family. In terms of assembly, part of the 50S ribosomal subunit; contacts the 5S rRNA.

It is found in the plastid. Its subcellular location is the chloroplast. Binds 5S rRNA, forms part of the central protuberance of the 50S subunit. This is Large ribosomal subunit protein uL5c (rpl5) from Thalassiosira pseudonana (Marine diatom).